The chain runs to 395 residues: Protein SGT1 (395 aa).

Residue lysine 32 forms a Glycyl lysine isopeptide (Lys-Gly) (interchain with G-Cter in ubiquitin) linkage. Residues 137–175 form a disordered region; that stretch reads KKNKKQKDSTNKHTIKPVESIENRGDNNSSHSPISPLKI. Phosphoserine occurs at positions 168 and 171. One can recognise a CS domain in the interval 182 to 277; that stretch reads SPKFKIDWYQ…IDSTQWKKLE (96 aa). The region spanning 312 to 395 is the SGS domain; sequence SYPSSSKKKI…PPEGMEPKHW (84 aa). Residues 373–395 form a disordered region; it reads DWEDVSKGTVKTSPPEGMEPKHW.

Belongs to the SGT1 family. In terms of assembly, interacts with SKP1/CBF3D. Part of SCF E3 ubiquitin ligase complexes containing SKP1, CDC53, HRT1 and some F-box proteins. Interacts with CIR1/CDC35.

In terms of biological role, involved in ubiquitination and subsequent proteasomal degradation of target proteins. Required for both entry into S phase and kinetochore function. Also involved in cyclic AMP (cAMP) pathway, possibly by participating in the assembly or the conformational activation of specific multiprotein complexes. This is Protein SGT1 from Saccharomyces cerevisiae (strain ATCC 204508 / S288c) (Baker's yeast).